The sequence spans 231 residues: Flagellar L-ring protein (231 aa).

The N-terminal stretch at 1–18 is a signal peptide; sequence MNRYVSVLALSGIAVLAG. Residue Cys19 is the site of N-palmitoyl cysteine attachment. Cys19 carries the S-diacylglycerol cysteine lipid modification.

The protein belongs to the FlgH family. In terms of assembly, the basal body constitutes a major portion of the flagellar organelle and consists of four rings (L,P,S, and M) mounted on a central rod.

The protein localises to the cell outer membrane. It is found in the bacterial flagellum basal body. Its function is as follows. Assembles around the rod to form the L-ring and probably protects the motor/basal body from shearing forces during rotation. The polypeptide is Flagellar L-ring protein (Pseudomonas fluorescens (strain SBW25)).